A 486-amino-acid polypeptide reads, in one-letter code: Acetyl-coenzyme A carboxylase carboxyl transferase subunit beta, chloroplastic (486 aa).

In terms of domain architecture, CoA carboxyltransferase N-terminal spans 224-486 (LWVQCENCYG…FQFHGFFPRP (263 aa)). The Zn(2+) site is built by C228, C231, C247, and C250. The segment at 228–250 (CENCYGLNYKKFFSSKMNICEQC) adopts a C4-type zinc-finger fold.

It belongs to the AccD/PCCB family. As to quaternary structure, acetyl-CoA carboxylase is a heterohexamer composed of biotin carboxyl carrier protein, biotin carboxylase and 2 subunits each of ACCase subunit alpha and ACCase plastid-coded subunit beta (accD). Requires Zn(2+) as cofactor.

It localises to the plastid. The protein resides in the chloroplast stroma. The enzyme catalyses N(6)-carboxybiotinyl-L-lysyl-[protein] + acetyl-CoA = N(6)-biotinyl-L-lysyl-[protein] + malonyl-CoA. The protein operates within lipid metabolism; malonyl-CoA biosynthesis; malonyl-CoA from acetyl-CoA: step 1/1. In terms of biological role, component of the acetyl coenzyme A carboxylase (ACC) complex. Biotin carboxylase (BC) catalyzes the carboxylation of biotin on its carrier protein (BCCP) and then the CO(2) group is transferred by the transcarboxylase to acetyl-CoA to form malonyl-CoA. The sequence is that of Acetyl-coenzyme A carboxylase carboxyl transferase subunit beta, chloroplastic from Nymphaea alba (White water-lily).